Consider the following 295-residue polypeptide: Apolipoprotein E (295 aa).

Positions Met-1–Ala-18 are cleaved as a signal peptide. 6 tandem repeats follow at residues Thr-80–Ser-101, Pro-102–Gly-123, Ala-124–Gly-145, Gln-146–Leu-167, Thr-193–Arg-211, and Ala-212–Ala-233. The interval Thr-80–Ala-233 is 6 X 22 AA approximate tandem repeats. Methionine sulfoxide is present on Met-143. Ser-147 carries the post-translational modification Phosphoserine. The segment at His-158–Arg-168 is LDL and other lipoprotein receptors binding. Leu-162 to Arg-165 is a heparin binding site. The lipid-binding and lipoprotein association stretch occupies residues Ala-191–Met-268. A homooligomerization region spans residues Gln-244–His-295. Residues Arg-256–Met-268 are specificity for association with VLDL.

This sequence belongs to the apolipoprotein A1/A4/E family. Homotetramer. May interact with ABCA1; functionally associated with ABCA1 in the biogenesis of HDLs. May interact with APP/A4 amyloid-beta peptide; the interaction is extremely stable in vitro but its physiological significance is unclear. May interact with MAPT. May interact with MAP2. In the cerebrospinal fluid, interacts with secreted SORL1. Interacts with PMEL; this allows the loading of PMEL luminal fragment on ILVs to induce fibril nucleation. In terms of processing, APOE exists as multiple glycosylated and sialylated glycoforms within cells and in plasma. The extent of glycosylation and sialylation are tissue and context specific. Glycated in plasma VLDL. Post-translationally, phosphorylated by FAM20C in the extracellular medium.

It localises to the secreted. Its subcellular location is the extracellular space. It is found in the extracellular matrix. The protein localises to the extracellular vesicle. The protein resides in the endosome. It localises to the multivesicular body. In terms of biological role, APOE is an apolipoprotein, a protein associating with lipid particles, that mainly functions in lipoprotein-mediated lipid transport between organs via the plasma and interstitial fluids. APOE is a core component of plasma lipoproteins and is involved in their production, conversion and clearance. Apolipoproteins are amphipathic molecules that interact both with lipids of the lipoprotein particle core and the aqueous environment of the plasma. As such, APOE associates with chylomicrons, chylomicron remnants, very low density lipoproteins (VLDL) and intermediate density lipoproteins (IDL) but shows a preferential binding to high-density lipoproteins (HDL). It also binds a wide range of cellular receptors including the LDL receptor/LDLR, the LDL receptor-related proteins LRP1, LRP2 and LRP8 and the very low-density lipoprotein receptor/VLDLR that mediate the cellular uptake of the APOE-containing lipoprotein particles. Finally, APOE also has a heparin-binding activity and binds heparan-sulfate proteoglycans on the surface of cells, a property that supports the capture and the receptor-mediated uptake of APOE-containing lipoproteins by cells. A main function of APOE is to mediate lipoprotein clearance through the uptake of chylomicrons, VLDLs, and HDLs by hepatocytes. APOE is also involved in the biosynthesis by the liver of VLDLs as well as their uptake by peripheral tissues ensuring the delivery of triglycerides and energy storage in muscle, heart and adipose tissues. By participating in the lipoprotein-mediated distribution of lipids among tissues, APOE plays a critical role in plasma and tissues lipid homeostasis. APOE is also involved in two steps of reverse cholesterol transport, the HDLs-mediated transport of cholesterol from peripheral tissues to the liver, and thereby plays an important role in cholesterol homeostasis. First, it is functionally associated with ABCA1 in the biogenesis of HDLs in tissues. Second, it is enriched in circulating HDLs and mediates their uptake by hepatocytes. APOE also plays an important role in lipid transport in the central nervous system, regulating neuron survival and sprouting. This is Apolipoprotein E (APOE) from Macaca mulatta (Rhesus macaque).